A 244-amino-acid polypeptide reads, in one-letter code: Mast cell protease 2 (244 aa).

The N-terminal stretch at Met1–Ala18 is a signal peptide. Positions Glu19–Glu20 are cleaved as a propeptide — activation peptide. The region spanning Ile21–Lys242 is the Peptidase S1 domain. N-linked (GlcNAc...) asparagine glycosylation occurs at Asn44. An intrachain disulfide couples Cys50 to Cys66. Active-site charge relay system residues include His65 and Asp109. 2 cysteine pairs are disulfide-bonded: Cys143–Cys208 and Cys174–Cys187. Ser202 functions as the Charge relay system in the catalytic mechanism.

It belongs to the peptidase S1 family. Granzyme subfamily. In terms of tissue distribution, mucosal mast cells.

The protein is Mast cell protease 2 (Mcpt2) of Mus musculus (Mouse).